The sequence spans 185 residues: Ribosome-recycling factor (185 aa).

This sequence belongs to the RRF family.

It is found in the cytoplasm. Responsible for the release of ribosomes from messenger RNA at the termination of protein biosynthesis. May increase the efficiency of translation by recycling ribosomes from one round of translation to another. In Helicobacter pylori (strain Shi470), this protein is Ribosome-recycling factor.